Here is a 197-residue protein sequence, read N- to C-terminus: Protein GrpE (197 aa).

A compositionally biased stretch (basic and acidic residues) spans 1-27; sequence MSNKEQHIEKEEQLQEEKHEEQQKTEE. The interval 1–34 is disordered; it reads MSNKEQHIEKEEQLQEEKHEEQQKTEETEVEAVN.

The protein belongs to the GrpE family. In terms of assembly, homodimer.

The protein localises to the cytoplasm. Participates actively in the response to hyperosmotic and heat shock by preventing the aggregation of stress-denatured proteins, in association with DnaK and GrpE. It is the nucleotide exchange factor for DnaK and may function as a thermosensor. Unfolded proteins bind initially to DnaJ; upon interaction with the DnaJ-bound protein, DnaK hydrolyzes its bound ATP, resulting in the formation of a stable complex. GrpE releases ADP from DnaK; ATP binding to DnaK triggers the release of the substrate protein, thus completing the reaction cycle. Several rounds of ATP-dependent interactions between DnaJ, DnaK and GrpE are required for fully efficient folding. The chain is Protein GrpE from Pasteurella multocida (strain Pm70).